The chain runs to 210 residues: Large ribosomal subunit protein uL3 (210 aa).

Residues 131–154 are disordered; sequence GPMSHGSKYHRRVGSMGATTDPGR.

It belongs to the universal ribosomal protein uL3 family. As to quaternary structure, part of the 50S ribosomal subunit. Forms a cluster with proteins L14 and L19.

In terms of biological role, one of the primary rRNA binding proteins, it binds directly near the 3'-end of the 23S rRNA, where it nucleates assembly of the 50S subunit. This is Large ribosomal subunit protein uL3 from Thermoanaerobacter pseudethanolicus (strain ATCC 33223 / 39E) (Clostridium thermohydrosulfuricum).